The following is a 466-amino-acid chain: Probable multidrug resistance protein NorM (466 aa).

The next 11 membrane-spanning stretches (helical) occupy residues 68-90, 110-132, 142-164, 177-199, 209-231, 251-273, 288-310, 331-353, 368-387, 407-429, and 433-455; these read AHTVYFVSFTFGLGLMAAVSPLV, LWVALLISLPMMASPLYGEHILI, ALAQRYLNGLAWGIAPALGFIAL, PLWITVAAIPVNAALVYVLIHGL, GAGLATTLVNLGTFLAVLAIAAW, LVRQLIALGAPISSSLLLEYGLF, LAAHQIALQVTAVLFMVPLGIGM, AGLVAAVLGVALVSALTVAIILG, SAATVELTATLLLVGATFFI, MTLAFAAIGYWCVAFPVAWVLAF, and LGAVGVWIGFSIGTFVYAGLLVL.

Belongs to the multi antimicrobial extrusion (MATE) (TC 2.A.66.1) family.

The protein resides in the cell inner membrane. Functionally, multidrug efflux pump. This chain is Probable multidrug resistance protein NorM (norM), found in Bradyrhizobium diazoefficiens (strain JCM 10833 / BCRC 13528 / IAM 13628 / NBRC 14792 / USDA 110).